The following is a 236-amino-acid chain: DNA repair protein RecO (236 aa).

Belongs to the RecO family.

Functionally, involved in DNA repair and RecF pathway recombination. The polypeptide is DNA repair protein RecO (Haemophilus influenzae (strain PittGG)).